The primary structure comprises 77 residues: Large ribosomal subunit protein bL31 (77 aa).

Zn(2+) is bound by residues C16, C18, C37, and C40.

It belongs to the bacterial ribosomal protein bL31 family. Type A subfamily. Part of the 50S ribosomal subunit. Requires Zn(2+) as cofactor.

Its function is as follows. Binds the 23S rRNA. The chain is Large ribosomal subunit protein bL31 from Pseudomonas fluorescens (strain SBW25).